We begin with the raw amino-acid sequence, 105 residues long: Large ribosomal subunit protein uL24 (105 aa).

It belongs to the universal ribosomal protein uL24 family. As to quaternary structure, part of the 50S ribosomal subunit.

One of two assembly initiator proteins, it binds directly to the 5'-end of the 23S rRNA, where it nucleates assembly of the 50S subunit. Functionally, one of the proteins that surrounds the polypeptide exit tunnel on the outside of the subunit. This is Large ribosomal subunit protein uL24 from Mycobacterium tuberculosis (strain CDC 1551 / Oshkosh).